We begin with the raw amino-acid sequence, 200 residues long: Superoxide dismutase [Mn], mitochondrial (200 aa).

Positions 27, 72, 157, and 161 each coordinate Mn(2+).

This sequence belongs to the iron/manganese superoxide dismutase family. It depends on Mn(2+) as a cofactor.

The protein resides in the mitochondrion matrix. It carries out the reaction 2 superoxide + 2 H(+) = H2O2 + O2. Functionally, destroys superoxide anion radicals which are normally produced within the cells and which are toxic to biological systems. This is Superoxide dismutase [Mn], mitochondrial (sod) from Agaricus bisporus (White button mushroom).